The sequence spans 36 residues: Kappa-isophellitoxin-Tst1a (36 aa).

The region spanning 2–36 (CENNFSDRECERRKKDCDSSMKFRELSCPKTCGTC) is the ShKT domain. Disulfide bonds link Cys-2/Cys-36, Cys-11/Cys-29, and Cys-18/Cys-33.

It belongs to the sea anemone type 1 potassium channel toxin family. Type 1a subfamily. As to expression, predominantly expressed in mesenterial filaments (at protein level), a morphological structure that has a functional role in prey killing and digestion. Also expressed in club-tips, tentacles, actinopharynx, body column, mesenterial filaments and pedal disk.

The protein resides in the secreted. The protein localises to the nematocyst. In terms of biological role, probable toxin with unknown function. Does not inhibit all channels tested. Is not cytotoxic on macrophage. The polypeptide is Kappa-isophellitoxin-Tst1a (Telmatactis stephensoni (Sea anemone)).